We begin with the raw amino-acid sequence, 70 residues long: Large ribosomal subunit protein bL31 (70 aa).

Residues cysteine 16, cysteine 18, cysteine 37, and cysteine 40 each contribute to the Zn(2+) site.

This sequence belongs to the bacterial ribosomal protein bL31 family. Type A subfamily. As to quaternary structure, part of the 50S ribosomal subunit. Zn(2+) serves as cofactor.

In terms of biological role, binds the 23S rRNA. In Shewanella frigidimarina (strain NCIMB 400), this protein is Large ribosomal subunit protein bL31.